A 500-amino-acid chain; its full sequence is Intracellular exo-alpha-(1-&gt;5)-L-arabinofuranosidase (500 aa).

The alpha-L-arabinofuranose site is built by Glu28, Asn73, and Asn173. Glu174 serves as the catalytic Proton donor/acceptor. Alpha-L-arabinofuranose is bound by residues Tyr245, Glu293, and Gln350. Glu293 (nucleophile) is an active-site residue.

It belongs to the glycosyl hydrolase 51 family. In terms of assembly, homohexamer; trimer of dimers.

The protein localises to the cytoplasm. It carries out the reaction Hydrolysis of terminal non-reducing alpha-L-arabinofuranoside residues in alpha-L-arabinosides.. The protein operates within glycan metabolism; L-arabinan degradation. Its function is as follows. Involved in the degradation of arabinan and is a key enzyme in the complete degradation of the plant cell wall. Catalyzes the cleavage of terminal alpha-(1-&gt;5)-arabinofuranosyl bonds in different hemicellulosic homopolysaccharides (branched and debranched arabinans). The protein is Intracellular exo-alpha-(1-&gt;5)-L-arabinofuranosidase (abfA) of Halalkalibacterium halodurans (strain ATCC BAA-125 / DSM 18197 / FERM 7344 / JCM 9153 / C-125) (Bacillus halodurans).